We begin with the raw amino-acid sequence, 92 residues long: Co-chaperonin GroES (92 aa).

Belongs to the GroES chaperonin family. Heptamer of 7 subunits arranged in a ring. Interacts with the chaperonin GroEL.

The protein resides in the cytoplasm. Together with the chaperonin GroEL, plays an essential role in assisting protein folding. The GroEL-GroES system forms a nano-cage that allows encapsulation of the non-native substrate proteins and provides a physical environment optimized to promote and accelerate protein folding. GroES binds to the apical surface of the GroEL ring, thereby capping the opening of the GroEL channel. The protein is Co-chaperonin GroES of Methanosarcina barkeri (strain Fusaro / DSM 804).